The chain runs to 495 residues: Probable cytosol aminopeptidase (495 aa).

Residues Lys-261 and Asp-266 each contribute to the Mn(2+) site. Lys-273 is a catalytic residue. Asp-284, Asp-343, and Glu-345 together coordinate Mn(2+). Arg-347 is an active-site residue.

The protein belongs to the peptidase M17 family. The cofactor is Mn(2+).

It localises to the cytoplasm. It carries out the reaction Release of an N-terminal amino acid, Xaa-|-Yaa-, in which Xaa is preferably Leu, but may be other amino acids including Pro although not Arg or Lys, and Yaa may be Pro. Amino acid amides and methyl esters are also readily hydrolyzed, but rates on arylamides are exceedingly low.. The catalysed reaction is Release of an N-terminal amino acid, preferentially leucine, but not glutamic or aspartic acids.. Presumably involved in the processing and regular turnover of intracellular proteins. Catalyzes the removal of unsubstituted N-terminal amino acids from various peptides. In Chelativorans sp. (strain BNC1), this protein is Probable cytosol aminopeptidase.